The sequence spans 429 residues: Glutamate-1-semialdehyde 2,1-aminomutase 2 (429 aa).

Lys-268 carries the N6-(pyridoxal phosphate)lysine modification.

This sequence belongs to the class-III pyridoxal-phosphate-dependent aminotransferase family. HemL subfamily. In terms of assembly, homodimer. Requires pyridoxal 5'-phosphate as cofactor.

It localises to the cytoplasm. The catalysed reaction is (S)-4-amino-5-oxopentanoate = 5-aminolevulinate. Its pathway is porphyrin-containing compound metabolism; protoporphyrin-IX biosynthesis; 5-aminolevulinate from L-glutamyl-tRNA(Glu): step 2/2. The chain is Glutamate-1-semialdehyde 2,1-aminomutase 2 from Staphylococcus aureus (strain bovine RF122 / ET3-1).